A 398-amino-acid polypeptide reads, in one-letter code: Phosphoglycerate kinase (398 aa).

Substrate-binding positions include 21-23 (DFN), Arg-36, 59-62 (HLGR), Arg-119, and Arg-157. ATP-binding positions include Lys-208, Gly-296, Glu-327, and 354 to 357 (GGDS).

Belongs to the phosphoglycerate kinase family. As to quaternary structure, monomer.

Its subcellular location is the cytoplasm. The catalysed reaction is (2R)-3-phosphoglycerate + ATP = (2R)-3-phospho-glyceroyl phosphate + ADP. The protein operates within carbohydrate degradation; glycolysis; pyruvate from D-glyceraldehyde 3-phosphate: step 2/5. This is Phosphoglycerate kinase from Streptococcus sanguinis (strain SK36).